A 545-amino-acid chain; its full sequence is MAKEIIFSDEARNKLYEGVKKLNDAVKVTMGPRGRNVLIQKSFGAPSITKDGVSVAKEVELKDSLENMGASLVREVASKTADQAGDGTTTATVLAHAIFKEGLRNITAGANPIEVKRGMDKACEAIVAELKKLSREVKDKKEIAQVATISANSDEKIGNLIADAMEKVGKDGVITVEEAKSINDELNVVEGMQFDRGYLSPYFITNAEKMTVELSSPYILLFDKKIANLKDLLPVLEQIQKTGKPLLIIAEDIEGEALATLVVNKLRGVLNISAVKAPGFGDRRKAMLEDIAILTGGEVISEELGRTLESATIQDLGQASSVIIDKDNTTIVNGAGEKANIDARVNQIKAQIAETTSDYDREKLQERLAKLSGGVAVIKVGAATETEMKEKKDRVDDALSATKAAVEEGIVIGGGAALIKAKAKIKLDLQGDEAIGAAIVERALRAPLRQIAENAGFDAGVVVNSVENAKDENTGFDAAKGEYVNMLESGIIDPVKVERVALLNAVSVASMLLTTEATISEIKEDKPAMPDMSGMGGMGGMGGMM.

ATP-binding positions include 29 to 32 (TMGP), lysine 50, 86 to 90 (DGTTT), glycine 414, 477 to 479 (DAA), and aspartate 493.

Belongs to the chaperonin (HSP60) family. As to quaternary structure, forms a cylinder of 14 subunits composed of two heptameric rings stacked back-to-back. Interacts with the co-chaperonin GroES.

The protein resides in the cytoplasm. It catalyses the reaction ATP + H2O + a folded polypeptide = ADP + phosphate + an unfolded polypeptide.. Functionally, together with its co-chaperonin GroES, plays an essential role in assisting protein folding. The GroEL-GroES system forms a nano-cage that allows encapsulation of the non-native substrate proteins and provides a physical environment optimized to promote and accelerate protein folding. The polypeptide is Chaperonin GroEL (Campylobacter jejuni subsp. jejuni serotype O:6 (strain 81116 / NCTC 11828)).